Consider the following 60-residue polypeptide: Metallothionein (60 aa).

Residues 1–28 (MDPCECSKTGKCSCGGSCTCTNCSCTSC) are beta. Positions 4, 6, 12, 14, 18, 20, 23, 25, 28, 32, 33, 35, 36, 40, 43, 47, 49, 54, 58, and 59 each coordinate a divalent metal cation. The segment at 29–60 (KKSCCPCCPSGCSKCASGCVCKGKTCDTSCCQ) is alpha.

The protein belongs to the metallothionein superfamily. Type 1 family.

In terms of biological role, metallothioneins have a high content of cysteine residues that bind various heavy metals. In Chelon auratus (Golden grey mullet), this protein is Metallothionein (mt).